Here is a 469-residue protein sequence, read N- to C-terminus: UDP-N-acetylmuramate--L-alanine ligase (469 aa).

Residue 112-118 (GTHGKTT) participates in ATP binding.

Belongs to the MurCDEF family.

The protein resides in the cytoplasm. It catalyses the reaction UDP-N-acetyl-alpha-D-muramate + L-alanine + ATP = UDP-N-acetyl-alpha-D-muramoyl-L-alanine + ADP + phosphate + H(+). It participates in cell wall biogenesis; peptidoglycan biosynthesis. Functionally, cell wall formation. The protein is UDP-N-acetylmuramate--L-alanine ligase of Leptothrix cholodnii (strain ATCC 51168 / LMG 8142 / SP-6) (Leptothrix discophora (strain SP-6)).